We begin with the raw amino-acid sequence, 225 residues long: uncharacterized protein (225 aa).

This is an uncharacterized protein from Schizosaccharomyces pombe (strain 972 / ATCC 24843) (Fission yeast).